We begin with the raw amino-acid sequence, 699 residues long: MVRFFGLNKKKNEEKENTDLPADNEQNAAETSSSNVSGNEERIDPNSHDANPENANNDDASTTFGSSIQSSSIFSRGRMTYGTGASSSMATSEMRSHSSGHSGSKNSKNLQGFKDVGKPLRAVSFLNPVKEEESQDTQNTLDVSSSTSSTLATSGNARENSFTSRRSITLEYIHKSLSELEENLVDIMDDIHQDVISISKAVIEAIEYFKEFLPTTRDRIPYRISLEKSSSLRKINKIVLHFLDNLLVSDAFSNSRSILLRRFYFFLKKLNLITDDDLISESGVLPCLSVFCIGSHCNLPSMDKLGMILDELTKMDSSIISDQEGAFIAPILRGITPKSSILTIMFGLPNLQHEHYEMIKVLYSLFPDVHMYCVKDYIKKAASAVGSIPSHTAATIDTIAPTKFQFSPPYAVSENPLELPISMSLSTETSAKITGTLGGYLFPQTGSDKKFSQFASCSFAITCAHVVLSEKQDYPNVMVPSNVLQTSYKKVLTKESDRYPDGSVEKTAFLEEVQRIDQNLNWQKSNKFGQVVWGERAIVDHRLSDFAIIKVNSSFKCQNTLGNGLKSFPDPTLRFQNLHVKRKIFKMKPGMKVFKIGASTGYTSGELNSTKLVYWADGKLQSSEFVVASPTPLFASAGDSGAWILTKLEDRLGLGLVGMLHSYDGEQRQFGLFTPIGDILERLHAVTKIQWDIDPQLDG.

Disordered regions lie at residues 1–113 (MVRF…LQGF) and 129–158 (VKEEESQDTQNTLDVSSSTSSTLATSGNAR). A propeptide spanning residues 1-381 (MVRFFGLNKK…YCVKDYIKKA (381 aa)) is cleaved from the precursor. A compositionally biased stretch (polar residues) spans 24–38 (NEQNAAETSSSNVSG). The segment covering 39–51 (NEERIDPNSHDAN) has biased composition (basic and acidic residues). The span at 52–78 (PENANNDDASTTFGSSIQSSSIFSRGR) shows a compositional bias: low complexity. A compositionally biased stretch (polar residues) spans 83 to 93 (TGASSSMATSE). Low complexity-rich tracts occupy residues 97–109 (HSSGHSGSKNSKN) and 144–154 (SSSTSSTLATS). Residues 459–699 (FAITCAHVVL…QWDIDPQLDG (241 aa)) form a serine protease region. Residues His-465, Asp-545, and Ser-640 each act as charge relay system in the active site.

Belongs to the peptidase S64 family. Component of the plasma membrane SPS (SSY1-PTR3-SSY5) amino acid sensor complex. Post-translationally, the propeptide is autoproteolytically cleaved from the catalytic domain but remains associated, forming an inactive protease complex. This processing occurs even in the absence of signaling.

The protein localises to the cell membrane. Protease component of the SPS-sensor system, which regulates the expression of several amino acid-metabolizing enzymes and amino acid- and peptide-permeases in response to extracellular amino acid levels by controlling the activity of two transcription factors, STP1 and STP2. Catalyzes the activation of these transcription factors, which are synthesized as latent cytoplasmic precursors, by proteolytic removal of an N-terminal inhibitory domain containing cytoplasmic retention motifs. SSY5 binds as an inactive protease complex to STP1. In response to extracellular amino acids and dependent on the other SPS-sensor components, the inhibitory propeptide is induced to dissociate, and thereby enables the catalytic domain to process STP1. This is SPS-sensor serine protease component SSY5 (SSY5) from Saccharomyces cerevisiae (strain YJM789) (Baker's yeast).